The sequence spans 334 residues: Galactinol synthase 4 (334 aa).

K104 is an active-site residue. Positions 120, 122, and 258 each coordinate Mn(2+).

The protein belongs to the glycosyltransferase 8 family. Galactosyltransferase subfamily. Requires a divalent metal cation as cofactor.

Its subcellular location is the cytoplasm. It catalyses the reaction myo-inositol + UDP-alpha-D-galactose = alpha-D-galactosyl-(1-&gt;3)-1D-myo-inositol + UDP + H(+). Galactinol synthase involved in the biosynthesis of raffinose family oligosaccharides (RFOs) that function as osmoprotectants. May promote plant stress tolerance. The polypeptide is Galactinol synthase 4 (GOLS4) (Arabidopsis thaliana (Mouse-ear cress)).